Consider the following 129-residue polypeptide: Small ribosomal subunit protein uS11 (129 aa).

This sequence belongs to the universal ribosomal protein uS11 family. In terms of assembly, part of the 30S ribosomal subunit. Interacts with proteins S7 and S18. Binds to IF-3.

Functionally, located on the platform of the 30S subunit, it bridges several disparate RNA helices of the 16S rRNA. Forms part of the Shine-Dalgarno cleft in the 70S ribosome. The chain is Small ribosomal subunit protein uS11 from Pelotomaculum thermopropionicum (strain DSM 13744 / JCM 10971 / SI).